The following is a 388-amino-acid chain: Putative F-box protein At3g17490 (388 aa).

An F-box domain is found at M1 to H46.

The chain is Putative F-box protein At3g17490 from Arabidopsis thaliana (Mouse-ear cress).